We begin with the raw amino-acid sequence, 184 residues long: uncharacterized protein (184 aa).

It to M.tuberculosis Rv0487.

This is an uncharacterized protein from Mycobacterium leprae (strain TN).